Reading from the N-terminus, the 475-residue chain is NADP-dependent glyceraldehyde-3-phosphate dehydrogenase (475 aa).

Arg103 contacts substrate. Ser151 contacts NADP(+). 154-155 (NY) serves as a coordination point for substrate. NADP(+)-binding positions include Lys177, Thr180, Asp215, and 230–251 (GSTGIGERIGKMAGMRPIMLEL). Catalysis depends on residues Glu250 and Cys284. Position 283–285 (283–285 (RCT)) interacts with substrate. Glu377 lines the NADP(+) pocket. Arg437 contacts substrate.

The protein belongs to the aldehyde dehydrogenase family. As to quaternary structure, homotetramer.

The catalysed reaction is D-glyceraldehyde 3-phosphate + NADP(+) + H2O = (2R)-3-phosphoglycerate + NADPH + 2 H(+). This is NADP-dependent glyceraldehyde-3-phosphate dehydrogenase (gapN) from Streptococcus mutans serotype c (strain ATCC 700610 / UA159).